The sequence spans 430 residues: 3-phosphoshikimate 1-carboxyvinyltransferase (430 aa).

Residues Lys-20, Ser-21, and Arg-25 each coordinate 3-phosphoshikimate. Lys-20 is a phosphoenolpyruvate binding site. Phosphoenolpyruvate is bound by residues Gly-92 and Arg-120. 3-phosphoshikimate-binding residues include Ser-166, Gln-168, Asp-312, and Lys-339. Gln-168 is a binding site for phosphoenolpyruvate. Catalysis depends on Asp-312, which acts as the Proton acceptor. Phosphoenolpyruvate contacts are provided by Arg-343 and Arg-387.

Belongs to the EPSP synthase family. As to quaternary structure, monomer.

It localises to the cytoplasm. The enzyme catalyses 3-phosphoshikimate + phosphoenolpyruvate = 5-O-(1-carboxyvinyl)-3-phosphoshikimate + phosphate. It functions in the pathway metabolic intermediate biosynthesis; chorismate biosynthesis; chorismate from D-erythrose 4-phosphate and phosphoenolpyruvate: step 6/7. Functionally, catalyzes the transfer of the enolpyruvyl moiety of phosphoenolpyruvate (PEP) to the 5-hydroxyl of shikimate-3-phosphate (S3P) to produce enolpyruvyl shikimate-3-phosphate and inorganic phosphate. In Lactococcus lactis subsp. cremoris (strain SK11), this protein is 3-phosphoshikimate 1-carboxyvinyltransferase.